The chain runs to 183 residues: MRYSVIASKYVKALLIVGQKLNKIEKYGEFLSFVKNIYESFATFFNNPIVKPEQKTLVIKQAFEEVFKESPGEAFLNFINIVFENKREKFIPQMQALYKYAAIDIENKILVNVKTAVKLSDQEIKVINDFVEKYVGKTPVIEETIDESLIAGAVIEFAGKMIDVSIKGRMDKIAKEVFFLRKG.

This sequence belongs to the ATPase delta chain family. F-type ATPases have 2 components, F(1) - the catalytic core - and F(0) - the membrane proton channel. F(1) has five subunits: alpha(3), beta(3), gamma(1), delta(1), epsilon(1). F(0) has three main subunits: a(1), b(2) and c(10-14). The alpha and beta chains form an alternating ring which encloses part of the gamma chain. F(1) is attached to F(0) by a central stalk formed by the gamma and epsilon chains, while a peripheral stalk is formed by the delta and b chains.

Its subcellular location is the cell inner membrane. Its function is as follows. F(1)F(0) ATP synthase produces ATP from ADP in the presence of a proton or sodium gradient. F-type ATPases consist of two structural domains, F(1) containing the extramembraneous catalytic core and F(0) containing the membrane proton channel, linked together by a central stalk and a peripheral stalk. During catalysis, ATP synthesis in the catalytic domain of F(1) is coupled via a rotary mechanism of the central stalk subunits to proton translocation. Functionally, this protein is part of the stalk that links CF(0) to CF(1). It either transmits conformational changes from CF(0) to CF(1) or is implicated in proton conduction. The chain is ATP synthase subunit delta from Thermosipho africanus (strain TCF52B).